The sequence spans 189 residues: Peptidyl-tRNA hydrolase (189 aa).

A tRNA-binding site is contributed by Tyr-16. His-21 serves as the catalytic Proton acceptor. Positions 67, 69, and 115 each coordinate tRNA.

The protein belongs to the PTH family. Monomer.

It is found in the cytoplasm. The catalysed reaction is an N-acyl-L-alpha-aminoacyl-tRNA + H2O = an N-acyl-L-amino acid + a tRNA + H(+). Functionally, hydrolyzes ribosome-free peptidyl-tRNAs (with 1 or more amino acids incorporated), which drop off the ribosome during protein synthesis, or as a result of ribosome stalling. Its function is as follows. Catalyzes the release of premature peptidyl moieties from peptidyl-tRNA molecules trapped in stalled 50S ribosomal subunits, and thus maintains levels of free tRNAs and 50S ribosomes. The polypeptide is Peptidyl-tRNA hydrolase (Legionella pneumophila subsp. pneumophila (strain Philadelphia 1 / ATCC 33152 / DSM 7513)).